We begin with the raw amino-acid sequence, 296 residues long: ATP synthase gamma chain (296 aa).

This sequence belongs to the ATPase gamma chain family. In terms of assembly, F-type ATPases have 2 components, CF(1) - the catalytic core - and CF(0) - the membrane proton channel. CF(1) has five subunits: alpha(3), beta(3), gamma(1), delta(1), epsilon(1). CF(0) has three main subunits: a, b and c.

It localises to the cell membrane. Its function is as follows. Produces ATP from ADP in the presence of a proton gradient across the membrane. The gamma chain is believed to be important in regulating ATPase activity and the flow of protons through the CF(0) complex. This is ATP synthase gamma chain from Pseudarthrobacter chlorophenolicus (strain ATCC 700700 / DSM 12829 / CIP 107037 / JCM 12360 / KCTC 9906 / NCIMB 13794 / A6) (Arthrobacter chlorophenolicus).